Here is a 234-residue protein sequence, read N- to C-terminus: Adenosine 5'-phosphosulfate reductase (234 aa).

Residues Cys-120, Cys-121, Cys-203, and Cys-206 each coordinate [4Fe-4S] cluster. Residue Cys-229 is the Nucleophile; cysteine thiosulfonate intermediate of the active site.

It belongs to the PAPS reductase family. CysH subfamily. It depends on [4Fe-4S] cluster as a cofactor.

The protein localises to the cytoplasm. It catalyses the reaction [thioredoxin]-disulfide + sulfite + AMP + 2 H(+) = adenosine 5'-phosphosulfate + [thioredoxin]-dithiol. The protein operates within sulfur metabolism; hydrogen sulfide biosynthesis; sulfite from sulfate. In terms of biological role, catalyzes the formation of sulfite from adenosine 5'-phosphosulfate (APS) using thioredoxin as an electron donor. The protein is Adenosine 5'-phosphosulfate reductase of Bacillus cereus (strain ZK / E33L).